Here is a 72-residue protein sequence, read N- to C-terminus: ATP synthase subunit c (72 aa).

The next 2 membrane-spanning stretches (helical) occupy residues 1–21 (MSLGVIAAAIAIGLSALGAGI) and 49–69 (FIGVALVEALPIIGVVIAFIV).

The protein belongs to the ATPase C chain family. F-type ATPases have 2 components, F(1) - the catalytic core - and F(0) - the membrane proton channel. F(1) has five subunits: alpha(3), beta(3), gamma(1), delta(1), epsilon(1). F(0) has three main subunits: a(1), b(2) and c(10-14). The alpha and beta chains form an alternating ring which encloses part of the gamma chain. F(1) is attached to F(0) by a central stalk formed by the gamma and epsilon chains, while a peripheral stalk is formed by the delta and b chains.

The protein localises to the cell membrane. Functionally, f(1)F(0) ATP synthase produces ATP from ADP in the presence of a proton or sodium gradient. F-type ATPases consist of two structural domains, F(1) containing the extramembraneous catalytic core and F(0) containing the membrane proton channel, linked together by a central stalk and a peripheral stalk. During catalysis, ATP synthesis in the catalytic domain of F(1) is coupled via a rotary mechanism of the central stalk subunits to proton translocation. Its function is as follows. Key component of the F(0) channel; it plays a direct role in translocation across the membrane. A homomeric c-ring of between 10-14 subunits forms the central stalk rotor element with the F(1) delta and epsilon subunits. The sequence is that of ATP synthase subunit c from Bacillus cytotoxicus (strain DSM 22905 / CIP 110041 / 391-98 / NVH 391-98).